We begin with the raw amino-acid sequence, 618 residues long: DNA mismatch repair protein MutL (618 aa).

Residues 367-381 are compositionally biased toward low complexity; that stretch reads EPTAAREPATPRYSG. A disordered region spans residues 367 to 402; the sequence is EPTAAREPATPRYSGGASGGNGGRQSAGGWPHAQPG. The span at 382 to 392 shows a compositional bias: gly residues; the sequence is GASGGNGGRQS.

Belongs to the DNA mismatch repair MutL/HexB family.

In terms of biological role, this protein is involved in the repair of mismatches in DNA. It is required for dam-dependent methyl-directed DNA mismatch repair. May act as a 'molecular matchmaker', a protein that promotes the formation of a stable complex between two or more DNA-binding proteins in an ATP-dependent manner without itself being part of a final effector complex. The chain is DNA mismatch repair protein MutL from Salmonella dublin (strain CT_02021853).